Consider the following 531-residue polypeptide: MRLHLAAILILCIEHVTKAVAQGMPISPCPKVFQYRFDGSEWFGLMAVRSPDGHQPLHIRVTLSMRGKPTTYTQNYLGEIELLTRGKFTHNAPVLYKIRFPKHHFPPKLLLMSANNHVICFGSGEHSIFMTQIQLEHIRKLSFIPDKKSSLLLDPEEEEVRKTDDKPPSTPHIQFKKKPFAQAPKEICGRIDRDLDFHLSQRTESLHVAIGEPKSSDGITSPVFVDDDEDDVLEHQFVDESEAEAIESDSADSLPSITRGSWPWLAAIYVNNLTSLDFQCGGSLVSARVVISSAHCFKLFNKRYTSNEVLVFLGRHNLKNWNEEGSLAAPVDGIYIHPDFNSQLSSYDADIAVIILKDEVRFNTFIRPACLWSGSSKTEYIVGERGIVIGWSFDRTNRTRDQKLSSELPGKKSTDASAPKVVKAPIVGNAECFRANAHFRSLSSNRTFCAGIQAEERDTHQSGASIYTGISGAGLFIRRNNRWMLRGTVSAALPAVETPDAESSHKLCCKNQYIIYADVAKFLDWITAFVI.

The N-terminal stretch at 1 to 19 (MRLHLAAILILCIEHVTKA) is a signal peptide. The interval 155–174 (PEEEEVRKTDDKPPSTPHIQ) is disordered. A Peptidase S1 domain is found at 246–531 (IESDSADSLP…FLDWITAFVI (286 aa)). Asn272 carries N-linked (GlcNAc...) asparagine glycosylation. Cys280 and Cys296 are oxidised to a cystine. Active-site charge relay system residues include His295 and Asp350. 2 N-linked (GlcNAc...) asparagine glycosylation sites follow: Asn397 and Asn445. An intrachain disulfide couples Cys432 to Cys449. The active-site Charge relay system is the Ser471.

Belongs to the peptidase S1 family. Proteolytically activated by the protease ndl. As to expression, expression begins in previtellogenic stages and is seen in germline-derived nurse cells of the germarium. Expression continues throughout oogenesis with transcripts from the nurse cells accumulating in the oocytes. Most abundant in the ovaries, the level of protein decreases from the moment of egg laying and is essentially gone by 4 hours.

The protein resides in the secreted. Functionally, component of the extracellular signaling pathway that establishes the dorsal-ventral pathway of the embryo. A protease cascade involving ndl, gd, snk and ea results in activation of the spz Toll receptor ligand; acts downstream of ndl but upstream of snk and ea. Activation of ea requires activation of the ndl-gd-snk protease cascade and sulfation of a vitelline membrane component by pip. Localized activation of the Toll receptor in the ventral region of the embryo defines cell identities along the dorsal-ventral continuum. The sequence is that of Serine protease gd from Drosophila melanogaster (Fruit fly).